Here is a 361-residue protein sequence, read N- to C-terminus: Carbon monoxide-induced hydrogenase (361 aa).

4 residues coordinate Ni(2+): cysteine 64, cysteine 67, cysteine 355, and cysteine 358.

The protein to E.coli formate hydrogenlyase hydrogenase isozyme 3 and to bovine mitochondrial NADH-ubiquinone oxidoreductase. The cofactor is Ni(2+).

The carbon monoxide dehydrogenase (CODH) oxidizes carbon monoxide coupled, via CooF, to the reduction of a hydrogen cation by a hydrogenase (probably CooH). The sequence is that of Carbon monoxide-induced hydrogenase (cooH) from Rhodospirillum rubrum.